Reading from the N-terminus, the 305-residue chain is Acetyl-coenzyme A carboxylase carboxyl transferase subunit beta (305 aa).

The CoA carboxyltransferase N-terminal domain occupies Leu27–Arg296. Residues Cys31, Cys34, Cys50, and Cys53 each coordinate Zn(2+). The segment at Cys31 to Cys53 adopts a C4-type zinc-finger fold.

It belongs to the AccD/PCCB family. In terms of assembly, acetyl-CoA carboxylase is a heterohexamer composed of biotin carboxyl carrier protein (AccB), biotin carboxylase (AccC) and two subunits each of ACCase subunit alpha (AccA) and ACCase subunit beta (AccD). Zn(2+) serves as cofactor.

It localises to the cytoplasm. It catalyses the reaction N(6)-carboxybiotinyl-L-lysyl-[protein] + acetyl-CoA = N(6)-biotinyl-L-lysyl-[protein] + malonyl-CoA. The protein operates within lipid metabolism; malonyl-CoA biosynthesis; malonyl-CoA from acetyl-CoA: step 1/1. Its function is as follows. Component of the acetyl coenzyme A carboxylase (ACC) complex. Biotin carboxylase (BC) catalyzes the carboxylation of biotin on its carrier protein (BCCP) and then the CO(2) group is transferred by the transcarboxylase to acetyl-CoA to form malonyl-CoA. This is Acetyl-coenzyme A carboxylase carboxyl transferase subunit beta from Chloroflexus aggregans (strain MD-66 / DSM 9485).